We begin with the raw amino-acid sequence, 78 residues long: Colicin-V immunity protein (78 aa).

In terms of biological role, this protein is able to protect a cell, which harbors the plasmid ColV encoding colicin V, against colicin V. The chain is Colicin-V immunity protein (cvi) from Escherichia coli.